The primary structure comprises 1258 residues: Phosphatidylinositol 3,4,5-trisphosphate 5-phosphatase 2 (1258 aa).

Residues 21-117 (WYHRDLSRAA…GLVCALLLPV (97 aa)) form the SH2 domain. A compositionally biased stretch (basic and acidic residues) spans 119–132 (GEREPDPPDDRDAS). Residues 119–180 (GEREPDPPDD…AESAPNGLST (62 aa)) are disordered. Serine 132 carries the post-translational modification Phosphoserine. Over residues 145 to 155 (SGSTSISAPTG) the composition is skewed to polar residues. The span at 156–166 (PSSPLPAPETP) shows a compositional bias: pro residues. Threonine 165 carries the post-translational modification Phosphothreonine. Phosphoserine occurs at positions 241 and 352. Tyrosine 886 is modified (phosphotyrosine). Residue serine 890 is modified to Phosphoserine. Residues 897–1118 (GAKSKAPSVS…FLGEVASGDD (222 aa)) form a disordered region. The segment covering 938–950 (PPPTGRPPAPPRA) has biased composition (pro residues). The short motif at 944 to 949 (PPAPPR) is the SH3-binding element. The segment covering 951–965 (APREEPLTPRLKPEG) has biased composition (basic and acidic residues). Threonine 958 is modified (phosphothreonine). The NPXY motif signature appears at 983 to 986 (NPAY). Tyrosine 986 carries the post-translational modification Phosphotyrosine; by SRC. Composition is skewed to pro residues over residues 996-1007 (LLPPEPPSPARA), 1048-1059 (LPPPDFPPPPLP), and 1087-1104 (GPPP…PGPS). Serine 1131 is subject to Phosphoserine. Residues tyrosine 1135 and tyrosine 1162 each carry the phosphotyrosine modification. The SAM domain maps to 1196–1258 (LGEAGMSAWL…LLLDTLQLSK (63 aa)). Serine 1257 is modified (phosphoserine).

It belongs to the inositol 1,4,5-trisphosphate 5-phosphatase family. As to quaternary structure, interacts with tyrosine phosphorylated form of SHC1. Interacts with EGFR. Upon stimulation by the EGF signaling pathway, it forms a complex with SHC1 and EGFR. Interacts with cytoskeletal protein SORBS3/vinexin, promoting its localization to the periphery of cells. Forms a complex with filamin (FLNA or FLNB), actin, GPIb (GP1BA or GP1BB) that regulates cortical and submembraneous actin. Interacts with c-Met/MET, when c-Met/MET is phosphorylated on 'Tyr-1356'. Interacts with p130Cas/BCAR1. Interacts with CENTD3/ARAP3 via its SAM domain. Interacts with c-Cbl/CBL and CAP/SORBS1. Interacts with activated EPHA2 receptor. Interacts with receptor FCGR2A. Interacts with receptor FCGR2B. Interacts with tyrosine kinase ABL1. Interacts with tyrosine kinase TEC. Interacts with CSF1R. Interacts (via N-terminus) with SH3YL1 (via SH3 domain). Interacts with FCRL6 (tyrosine phosphorylated form). Interacts (via SH2 domain) with tyrosine phosphorylated KLRC1 (via ITIM). Interacts with NEDD9/HEF1. Post-translationally, tyrosine phosphorylated by the members of the SRC family after exposure to a diverse array of extracellular stimuli such as insulin, growth factors such as EGF or PDGF, chemokines, integrin ligands and hypertonic and oxidative stress. May be phosphorylated upon IgG receptor FCGR2B-binding. Phosphorylated at Tyr-986 following cell attachment and spreading. Phosphorylated at Tyr-1162 following EGF signaling pathway stimulation. Phosphorylated at Thr-958 in response to PDGF. Widely expressed, most prominently in skeletal muscle, heart and brain. Present in platelets. Expressed in transformed myeloid cells and in primary macrophages, but not in peripheral blood monocytes.

The protein localises to the cytoplasm. Its subcellular location is the cytosol. The protein resides in the cytoskeleton. It is found in the membrane. It localises to the cell projection. The protein localises to the filopodium. Its subcellular location is the lamellipodium. The protein resides in the basal cell membrane. It is found in the nucleus. It localises to the nucleus speckle. The protein localises to the spindle pole. It catalyses the reaction a 1,2-diacyl-sn-glycero-3-phospho-(1D-myo-inositol-3,4,5-trisphosphate) + H2O = a 1,2-diacyl-sn-glycero-3-phospho-(1D-myo-inositol-3,4-bisphosphate) + phosphate. The enzyme catalyses 1,2-dioctanoyl-sn-glycero-3-phospho-(1D-myo-inositol-3,4,5-trisphosphate) + H2O = 1,2-dioctanoyl-sn-glycero-3-phospho-(1D-myo-inositol-3,4-bisphosphate) + phosphate. The catalysed reaction is 1,2-dihexadecanoyl-sn-glycero-3-phospho-(1D-myo-inositol-3,4,5-trisphosphate) + H2O = 1,2-dihexadecanoyl-sn-glycero-3-phospho-(1D-myo-inositol-3,4-bisphosphate) + phosphate. Activated upon translocation to the sites of synthesis of PtdIns(3,4,5)P3 in the membrane. Enzymatic activity is enhanced in the presence of phosphatidylserine. In terms of biological role, phosphatidylinositol (PtdIns) phosphatase that specifically hydrolyzes the 5-phosphate of phosphatidylinositol-3,4,5-trisphosphate (PtdIns(3,4,5)P3) to produce PtdIns(3,4)P2, thereby negatively regulating the PI3K (phosphoinositide 3-kinase) pathways. Required for correct mitotic spindle orientation and therefore progression of mitosis. Plays a central role in regulation of PI3K-dependent insulin signaling, although the precise molecular mechanisms and signaling pathways remain unclear. While overexpression reduces both insulin-stimulated MAP kinase and Akt activation, its absence does not affect insulin signaling or GLUT4 trafficking. Confers resistance to dietary obesity. May act by regulating AKT2, but not AKT1, phosphorylation at the plasma membrane. Part of a signaling pathway that regulates actin cytoskeleton remodeling. Required for the maintenance and dynamic remodeling of actin structures as well as in endocytosis, having a major impact on ligand-induced EGFR internalization and degradation. Participates in regulation of cortical and submembraneous actin by hydrolyzing PtdIns(3,4,5)P3 thereby regulating membrane ruffling. Regulates cell adhesion and cell spreading. Required for HGF-mediated lamellipodium formation, cell scattering and spreading. Acts as a negative regulator of EPHA2 receptor endocytosis by inhibiting via PI3K-dependent Rac1 activation. Acts as a regulator of neuritogenesis by regulating PtdIns(3,4,5)P3 level and is required to form an initial protrusive pattern, and later, maintain proper neurite outgrowth. Acts as a negative regulator of the FC-gamma-RIIA receptor (FCGR2A). Mediates signaling from the FC-gamma-RIIB receptor (FCGR2B), playing a central role in terminating signal transduction from activating immune/hematopoietic cell receptor systems. Involved in EGF signaling pathway. Upon stimulation by EGF, it is recruited by EGFR and dephosphorylates PtdIns(3,4,5)P3. Plays a negative role in regulating the PI3K-PKB pathway, possibly by inhibiting PKB activity. Down-regulates Fc-gamma-R-mediated phagocytosis in macrophages independently of INPP5D/SHIP1. In macrophages, down-regulates NF-kappa-B-dependent gene transcription by regulating macrophage colony-stimulating factor (M-CSF)-induced signaling. Plays a role in the localization of AURKA and NEDD9/HEF1 to the basolateral membrane at interphase in polarized cysts, thereby mediates cell cycle homeostasis, cell polarization and cilia assembly. Additionally promotion of cilia growth is also facilitated by hydrolysis of (PtdIns(3,4,5)P3) to PtdIns(3,4)P2. Promotes formation of apical membrane-initiation sites during the initial stages of lumen formation via Rho family-induced actin filament organization and CTNNB1 localization to cell-cell contacts. May also hydrolyze PtdIns(1,3,4,5)P4, and could thus affect the levels of the higher inositol polyphosphates like InsP6. Involved in endochondral ossification. This is Phosphatidylinositol 3,4,5-trisphosphate 5-phosphatase 2 from Homo sapiens (Human).